The primary structure comprises 361 residues: Phospho-N-acetylmuramoyl-pentapeptide-transferase (361 aa).

10 helical membrane passes run 27–47 (GALF…ISLL), 72–92 (TPTM…FLWA), 99–119 (VWIT…DDYL), 139–159 (ALIA…GLAY), 169–189 (AIVN…VGAG), 200–220 (GLAI…AYLV), 240–260 (LAVV…FNAP), 264–284 (IFMG…VAVA), 289–309 (IVLA…IIQV), and 338–358 (QVVI…LATL).

This sequence belongs to the glycosyltransferase 4 family. MraY subfamily. Requires Mg(2+) as cofactor.

The protein localises to the cell inner membrane. The catalysed reaction is UDP-N-acetyl-alpha-D-muramoyl-L-alanyl-gamma-D-glutamyl-meso-2,6-diaminopimeloyl-D-alanyl-D-alanine + di-trans,octa-cis-undecaprenyl phosphate = di-trans,octa-cis-undecaprenyl diphospho-N-acetyl-alpha-D-muramoyl-L-alanyl-D-glutamyl-meso-2,6-diaminopimeloyl-D-alanyl-D-alanine + UMP. The protein operates within cell wall biogenesis; peptidoglycan biosynthesis. Its function is as follows. Catalyzes the initial step of the lipid cycle reactions in the biosynthesis of the cell wall peptidoglycan: transfers peptidoglycan precursor phospho-MurNAc-pentapeptide from UDP-MurNAc-pentapeptide onto the lipid carrier undecaprenyl phosphate, yielding undecaprenyl-pyrophosphoryl-MurNAc-pentapeptide, known as lipid I. The sequence is that of Phospho-N-acetylmuramoyl-pentapeptide-transferase from Methylobacterium sp. (strain 4-46).